Here is a 147-residue protein sequence, read N- to C-terminus: Mitochondrial import receptor subunit TOM20 homolog (147 aa).

Topologically, residues 1-3 (MVA) are mitochondrial intermembrane. The helical transmembrane segment at 4-26 (VGKTSAIAAGVCGALLLGYCIYF) threads the bilayer. The Cytoplasmic segment spans residues 27-147 (DRKRRSDPNF…AQNLSEDDVE (121 aa)).

It belongs to the Tom20 family. In terms of assembly, forms part of the preprotein translocase complex of the outer mitochondrial membrane (TOM complex). Interacts with tom22.

It localises to the mitochondrion outer membrane. Functionally, central component of the receptor complex responsible for the recognition and translocation of cytosolically synthesized mitochondrial preproteins. Together with tom22 functions as the transit peptide receptor at the surface of the mitochondrion outer membrane and facilitates the movement of preproteins into the tom40 translocation pore. This chain is Mitochondrial import receptor subunit TOM20 homolog (tomm20), found in Xenopus laevis (African clawed frog).